The following is a 233-amino-acid chain: 5'-methylthioadenosine/S-adenosylhomocysteine nucleosidase (233 aa).

The active-site Proton acceptor is the E12. Substrate-binding positions include G78, I153, and 174–175; that span reads ME. D198 (proton donor) is an active-site residue.

Belongs to the PNP/UDP phosphorylase family. MtnN subfamily.

The catalysed reaction is S-adenosyl-L-homocysteine + H2O = S-(5-deoxy-D-ribos-5-yl)-L-homocysteine + adenine. The enzyme catalyses S-methyl-5'-thioadenosine + H2O = 5-(methylsulfanyl)-D-ribose + adenine. It catalyses the reaction 5'-deoxyadenosine + H2O = 5-deoxy-D-ribose + adenine. Its pathway is amino-acid biosynthesis; L-methionine biosynthesis via salvage pathway; S-methyl-5-thio-alpha-D-ribose 1-phosphate from S-methyl-5'-thioadenosine (hydrolase route): step 1/2. Catalyzes the irreversible cleavage of the glycosidic bond in both 5'-methylthioadenosine (MTA) and S-adenosylhomocysteine (SAH/AdoHcy) to adenine and the corresponding thioribose, 5'-methylthioribose and S-ribosylhomocysteine, respectively. Also cleaves 5'-deoxyadenosine, a toxic by-product of radical S-adenosylmethionine (SAM) enzymes, into 5-deoxyribose and adenine. This Exiguobacterium sp. (strain ATCC BAA-1283 / AT1b) protein is 5'-methylthioadenosine/S-adenosylhomocysteine nucleosidase.